A 309-amino-acid chain; its full sequence is MRKKISIIGAGFVGSTTAHWLAAKELGDIVLLDIVEGVPQGKALDLYEASPIEGFDVRVTGTNNYADTANSDVIVVTSGAPRKPGMSREDLIKVNADITRACISQAAPLSPNAVIIMVNNPLDAMTYLAAEVSGFPKERVIGQAGVLDAARYRTFIAMEAGVSVEDVQAMLMGGHGDEMVPLPRFSTISGIPVSEFIAPDRLAQIVERTRKGGGEIVNLLKTGSAYYAPAAATAQMVEAVLKDKKRVMPVAAYLTGQYGLNDIYFGVPVILGAGGVEKILELPLNEEEMALLNASAKAVRATLDTLKSL.

NAD(+) is bound by residues 9-14 (GAGFVG) and D33. 2 residues coordinate substrate: R82 and R88. NAD(+)-binding positions include N95 and 118-120 (VNN). Positions 120 and 151 each coordinate substrate. H175 functions as the Proton acceptor in the catalytic mechanism.

Belongs to the LDH/MDH superfamily. MDH type 3 family.

The catalysed reaction is (S)-malate + NAD(+) = oxaloacetate + NADH + H(+). Its function is as follows. Catalyzes the reversible oxidation of malate to oxaloacetate. The sequence is that of Malate dehydrogenase from Chloroflexus aurantiacus (strain ATCC 29364 / DSM 637 / Y-400-fl).